Here is a 242-residue protein sequence, read N- to C-terminus: Biosynthetic peptidoglycan transglycosylase (242 aa).

The chain crosses the membrane as a helical span at residues 18–38 (VIMAVLCIAILYQLWMFSLVV).

The protein belongs to the glycosyltransferase 51 family.

It localises to the cell inner membrane. The catalysed reaction is [GlcNAc-(1-&gt;4)-Mur2Ac(oyl-L-Ala-gamma-D-Glu-L-Lys-D-Ala-D-Ala)](n)-di-trans,octa-cis-undecaprenyl diphosphate + beta-D-GlcNAc-(1-&gt;4)-Mur2Ac(oyl-L-Ala-gamma-D-Glu-L-Lys-D-Ala-D-Ala)-di-trans,octa-cis-undecaprenyl diphosphate = [GlcNAc-(1-&gt;4)-Mur2Ac(oyl-L-Ala-gamma-D-Glu-L-Lys-D-Ala-D-Ala)](n+1)-di-trans,octa-cis-undecaprenyl diphosphate + di-trans,octa-cis-undecaprenyl diphosphate + H(+). Its pathway is cell wall biogenesis; peptidoglycan biosynthesis. In terms of biological role, peptidoglycan polymerase that catalyzes glycan chain elongation from lipid-linked precursors. This is Biosynthetic peptidoglycan transglycosylase from Bordetella bronchiseptica (strain ATCC BAA-588 / NCTC 13252 / RB50) (Alcaligenes bronchisepticus).